Consider the following 1085-residue polypeptide: KN motif and ankyrin repeat domain-containing protein 2 (1085 aa).

A compositionally biased stretch (basic and acidic residues) spans 136-145 (KLEEEKDGRR). Residues 136 to 192 (KLEEEKDGRRFSNLGSMHSSMAGSNTSLSSAHSFNRAQGGGSYTPMSSGLSTPVSPT) form a disordered region. 2 stretches are compositionally biased toward polar residues: residues 148–171 (NLGS…SFNR) and 179–189 (TPMSSGLSTPV). Positions 196–216 (LQHVREQMAVALRKIRELEEQ) form a coiled coil. Residues 273 to 295 (NGAGAANKATGSLSPTTPGSLQD) are disordered. Positions 281-295 (ATGSLSPTTPGSLQD) are enriched in polar residues. Residues 356–383 (VGLLEVQLRKTMQELQSAQQQVEAAQKE) adopt a coiled-coil conformation. Disordered regions lie at residues 557–736 (RKAD…SNVQ), 752–791 (TTTQ…SAKQ), and 798–817 (TTKP…TDSL). Positions 589–600 (SSSESSEDESDA) are enriched in acidic residues. The segment covering 601-611 (SEYHEATEKLP) has biased composition (basic and acidic residues). Positions 614–648 (ATPQSLVSSCIPQLASETPATQTAQHSTAQIPTNH) are enriched in polar residues. Over residues 649 to 668 (TPAAQTTSQSHTTDATTQQH) the composition is skewed to low complexity. Polar residues-rich tracts occupy residues 706-736 (NPPS…SNVQ) and 760-788 (SAKP…TDGS). The segment covering 798–810 (TTKPAADTATPPT) has biased composition (low complexity). 5 ANK repeats span residues 895–925 (NGNT…NADK), 929–962 (AGYT…DVNA), 967–996 (AGQT…QVNL), 1000–1030 (DGST…DATL), and 1034–1063 (DGST…FAKP). Residues 1064-1085 (PSPVSPKSPILGSSPPSSSELK) are disordered. Over residues 1070–1085 (KSPILGSSPPSSSELK) the composition is skewed to low complexity.

It is found in the cytoplasm. Its subcellular location is the mitochondrion. Its function is as follows. May be involved in different biological processes including transcription and apoptosis by sequestering specific proteins outside of the nucleus. Involved in actin stress fibers formation probably through its interaction with ARHGDIA and the regulation of the Rho signaling pathway. May thereby play a role in cell adhesion and migration, regulating for instance podocytes migration during development of the kidney. In Danio rerio (Zebrafish), this protein is KN motif and ankyrin repeat domain-containing protein 2 (kank2).